The primary structure comprises 243 residues: Uridylate kinase (243 aa).

15–18 (KLSG) serves as a coordination point for ATP. The tract at residues 23-28 (GEEGFG) is involved in allosteric activation by GTP. Gly57 serves as a coordination point for UMP. ATP contacts are provided by Gly58 and Arg62. Residues Asp77 and 138-145 (TGNPFFTT) each bind UMP. ATP contacts are provided by Thr165, Phe171, and Asp174.

The protein belongs to the UMP kinase family. In terms of assembly, homohexamer.

Its subcellular location is the cytoplasm. The catalysed reaction is UMP + ATP = UDP + ADP. Its pathway is pyrimidine metabolism; CTP biosynthesis via de novo pathway; UDP from UMP (UMPK route): step 1/1. With respect to regulation, allosterically activated by GTP. Inhibited by UTP. In terms of biological role, catalyzes the reversible phosphorylation of UMP to UDP. This chain is Uridylate kinase, found in Aliivibrio fischeri (strain ATCC 700601 / ES114) (Vibrio fischeri).